Reading from the N-terminus, the 127-residue chain is Aspartate 1-decarboxylase (127 aa).

S25 (schiff-base intermediate with substrate; via pyruvic acid) is an active-site residue. S25 is subject to Pyruvic acid (Ser). T57 lines the substrate pocket. The active-site Proton donor is the Y58. 73-75 provides a ligand contact to substrate; the sequence is GAA.

Belongs to the PanD family. In terms of assembly, heterooctamer of four alpha and four beta subunits. Pyruvate serves as cofactor. In terms of processing, is synthesized initially as an inactive proenzyme, which is activated by self-cleavage at a specific serine bond to produce a beta-subunit with a hydroxyl group at its C-terminus and an alpha-subunit with a pyruvoyl group at its N-terminus.

It localises to the cytoplasm. It carries out the reaction L-aspartate + H(+) = beta-alanine + CO2. It functions in the pathway cofactor biosynthesis; (R)-pantothenate biosynthesis; beta-alanine from L-aspartate: step 1/1. Its function is as follows. Catalyzes the pyruvoyl-dependent decarboxylation of aspartate to produce beta-alanine. In Clostridium botulinum (strain Okra / Type B1), this protein is Aspartate 1-decarboxylase.